Reading from the N-terminus, the 1441-residue chain is Pleiotropic drug resistance protein TUR2 (1441 aa).

Residues 158 to 430 (LSALHLMPSG…FESMGFKCPE (273 aa)) enclose the ABC transporter 1 domain. ATP is bound at residue 191–198 (GPPGAGKT). Residues 508 to 721 (ELLKACIDRE…AQNAIAVNEF (214 aa)) enclose the ABC transmembrane type-2 1 domain. A run of 6 helical transmembrane segments spans residues 526–546 (FVYI…MTVF), 559–579 (ATIF…NGFA), 614–634 (IPIS…VIGF), 646–666 (LLLV…AAVG), 671–691 (VADT…GFII), and 756–776 (IGVG…ILFL). Residues 843-1095 (ITFDNVKYSV…HLIKYFESID (253 aa)) form the ABC transporter 2 domain. 888–895 (GVSGRGKT) contributes to the ATP binding site. Residues 1168-1382 (MQCLACLWKQ…TLYGLVVSQF (215 aa)) form the ABC transmembrane type-2 2 domain. The next 7 helical transmembrane spans lie at 1187–1207 (YTAT…TIFW), 1215–1235 (TSLD…FIGI), 1275–1295 (VPHI…MIGF), 1302–1322 (FLWY…YGMM), 1332–1352 (IAAI…GFII), 1363–1383 (WYYW…SQFG), and 1413–1433 (VVGV…AFSI).

Belongs to the ABC transporter superfamily. ABCG family. PDR (TC 3.A.1.205) subfamily. Ubiquitous.

Its subcellular location is the cell membrane. Functionally, may be a general defense protein. Seems involved in turion (dormant buds) formation. Confers resistance to the diterpenoid antifungal agent sclareol. The polypeptide is Pleiotropic drug resistance protein TUR2 (TUR2) (Spirodela polyrhiza (Giant duckweed)).